Consider the following 479-residue polypeptide: MRFYAVGLNHECTSLEQTETFALSAEEQEALYANLSLSADAEVVVLSTCNRTEAYLYGTEADLRQVKALIGQGGGTRWPEETAFQERDEAAVRHLLQVTSGLRSVVLGERQIFAQVKAAYERAVDAGGIHSVMHRLFHTAFRAAKRVSSETGLGRGAASVSTAAVEMARQDLSEAGGEGLRNTEIVLVGAGKMGRLALEALADESLASLTVVNRSPDRAREVASPFGGDTEPWADRHRAVATADLALVATGASDPVLHAPALPAPDEATLVVDVAMPRNVDPAVDERPGYRLYDLDDLEAWTAEVRERRADAVPEAESICEELLEDFVTWVFHQQALQPAIQAIRSTFDTIREQEVDRHAHRTGMDREEVDRLTESIMQKLLAVPIVRLKNVDPESIDFVQGIELLHALFAPSDESDAGRSLAEAPDADTPDLGEAPSRCPYMTHDPGGDGTETEEVQKALRLSAAHQAASHSEEVRGG.

Residues 48-51 (TCNR), serine 104, 109-111 (ERQ), and glutamine 115 each bind substrate. The active-site Nucleophile is the cysteine 49. 189–194 (GAGKMG) is an NADP(+) binding site. The segment at 417 to 455 (DAGRSLAEAPDADTPDLGEAPSRCPYMTHDPGGDGTETE) is disordered.

The protein belongs to the glutamyl-tRNA reductase family. In terms of assembly, homodimer.

It catalyses the reaction (S)-4-amino-5-oxopentanoate + tRNA(Glu) + NADP(+) = L-glutamyl-tRNA(Glu) + NADPH + H(+). It functions in the pathway porphyrin-containing compound metabolism; protoporphyrin-IX biosynthesis; 5-aminolevulinate from L-glutamyl-tRNA(Glu): step 1/2. Functionally, catalyzes the NADPH-dependent reduction of glutamyl-tRNA(Glu) to glutamate 1-semialdehyde (GSA). The sequence is that of Glutamyl-tRNA reductase from Salinibacter ruber (strain DSM 13855 / M31).